The chain runs to 158 residues: uncharacterized protein (158 aa).

One can recognise an HTH asnC-type domain in the interval Leu12 to Glu73. A DNA-binding region (H-T-H motif) is located at residues Tyr31–Asn50.

This is an uncharacterized protein from Pyrococcus horikoshii (strain ATCC 700860 / DSM 12428 / JCM 9974 / NBRC 100139 / OT-3).